Here is a 307-residue protein sequence, read N- to C-terminus: tRNA dimethylallyltransferase (307 aa).

An ATP-binding site is contributed by 8-15 (GPTGSGKS). Position 10–15 (10–15 (TGSGKS)) interacts with substrate. The interaction with substrate tRNA stretch occupies residues 33–36 (DSLQ).

This sequence belongs to the IPP transferase family. In terms of assembly, monomer. Mg(2+) serves as cofactor.

It carries out the reaction adenosine(37) in tRNA + dimethylallyl diphosphate = N(6)-dimethylallyladenosine(37) in tRNA + diphosphate. Its function is as follows. Catalyzes the transfer of a dimethylallyl group onto the adenine at position 37 in tRNAs that read codons beginning with uridine, leading to the formation of N6-(dimethylallyl)adenosine (i(6)A). In Solibacter usitatus (strain Ellin6076), this protein is tRNA dimethylallyltransferase.